Consider the following 297-residue polypeptide: TGF-beta receptor type-2 (297 aa).

An N-terminal signal peptide occupies residues 1–23 (MGRGLLGGLWPLHVVLWTRIAST). Topologically, residues 24-166 (IPPHVPKSVN…NPDLLLVIFQ (143 aa)) are extracellular. 6 disulfide bridges follow: Cys-51/Cys-84, Cys-54/Cys-71, Cys-61/Cys-67, Cys-77/Cys-101, Cys-121/Cys-136, and Cys-138/Cys-143. N-linked (GlcNAc...) asparagine glycosylation is found at Asn-70 and Asn-94. Residues 167–187 (VTGVSLLPPLGIAIAVIITFY) form a helical membrane-spanning segment. The Cytoplasmic segment spans residues 188-297 (CYRVHRQQKL…KTEKDIFSDL (110 aa)). Residues 244–297 (IELDTLVGKGRFAEVYKAKLRQNTSEQFETVAVKIFPYEEYASWKTEKDIFSDL) form the Protein kinase domain. ATP-binding positions include 250–258 (VGKGRFAEV) and Lys-277.

Belongs to the protein kinase superfamily. TKL Ser/Thr protein kinase family. TGFB receptor subfamily. In terms of assembly, homodimer. Heterohexamer; TGFB1, TGFB2 and TGFB3 homodimeric ligands assemble a functional receptor composed of two TGFBR1 and TGFBR2 heterodimers to form a ligand-receptor heterohexamer. The respective affinity of TGFRB1 and TGFRB2 for the ligands may modulate the kinetics of assembly of the receptor and may explain the different biological activities of TGFB1, TGFB2 and TGFB3. Component of a complex composed of TSC22D1 (via N-terminus), TGFBR1 and TGFBR2; the interaction between TSC22D1 and TGFBR1 is inhibited by SMAD7 and promoted by TGFB1. Interacts with DAXX. Interacts with DYNLT4. Interacts with ZFYVE9; ZFYVE9 recruits SMAD2 and SMAD3 to the TGF-beta receptor. Interacts with and is activated by SCUBE3; this interaction does not affect TGFB1-binding to TGFBR2. Interacts with VPS39; this interaction is independent of the receptor kinase activity and of the presence of TGF-beta. Interacts with CLU. Mg(2+) serves as cofactor. It depends on Mn(2+) as a cofactor. Post-translationally, phosphorylated on a Ser/Thr residue in the cytoplasmic domain.

It localises to the cell membrane. The protein localises to the membrane raft. The catalysed reaction is L-threonyl-[receptor-protein] + ATP = O-phospho-L-threonyl-[receptor-protein] + ADP + H(+). It carries out the reaction L-seryl-[receptor-protein] + ATP = O-phospho-L-seryl-[receptor-protein] + ADP + H(+). Functionally, transmembrane serine/threonine kinase forming with the TGF-beta type I serine/threonine kinase receptor, TGFBR1, the non-promiscuous receptor for the TGF-beta cytokines TGFB1, TGFB2 and TGFB3. Transduces the TGFB1, TGFB2 and TGFB3 signal from the cell surface to the cytoplasm and is thus regulating a plethora of physiological and pathological processes including cell cycle arrest in epithelial and hematopoietic cells, control of mesenchymal cell proliferation and differentiation, wound healing, extracellular matrix production, immunosuppression and carcinogenesis. The formation of the receptor complex composed of 2 TGFBR1 and 2 TGFBR2 molecules symmetrically bound to the cytokine dimer results in the phosphorylation and the activation of TGFRB1 by the constitutively active TGFBR2. Activated TGFBR1 phosphorylates SMAD2 which dissociates from the receptor and interacts with SMAD4. The SMAD2-SMAD4 complex is subsequently translocated to the nucleus where it modulates the transcription of the TGF-beta-regulated genes. This constitutes the canonical SMAD-dependent TGF-beta signaling cascade. Also involved in non-canonical, SMAD-independent TGF-beta signaling pathways. In Sus scrofa (Pig), this protein is TGF-beta receptor type-2 (TGFBR2).